Here is a 337-residue protein sequence, read N- to C-terminus: Anthranilate phosphoribosyltransferase (337 aa).

5-phospho-alpha-D-ribose 1-diphosphate-binding positions include Gly-81, 84–85 (GD), Ser-89, 91–94 (NVST), 109–117 (KHGNRAATS), and Ala-121. Gly-81 contacts anthranilate. Ser-93 contributes to the Mg(2+) binding site. Asn-112 serves as a coordination point for anthranilate. An anthranilate-binding site is contributed by Arg-167. Asp-226 and Glu-227 together coordinate Mg(2+).

The protein belongs to the anthranilate phosphoribosyltransferase family. As to quaternary structure, homodimer. The cofactor is Mg(2+).

The enzyme catalyses N-(5-phospho-beta-D-ribosyl)anthranilate + diphosphate = 5-phospho-alpha-D-ribose 1-diphosphate + anthranilate. The protein operates within amino-acid biosynthesis; L-tryptophan biosynthesis; L-tryptophan from chorismate: step 2/5. Catalyzes the transfer of the phosphoribosyl group of 5-phosphorylribose-1-pyrophosphate (PRPP) to anthranilate to yield N-(5'-phosphoribosyl)-anthranilate (PRA). This Methylorubrum extorquens (strain PA1) (Methylobacterium extorquens) protein is Anthranilate phosphoribosyltransferase.